A 553-amino-acid polypeptide reads, in one-letter code: HTH-type transcriptional regulator SgrR (553 aa).

The region spanning 1–113 (MSTSRLQQQF…RQMLLSQLGR (113 aa)) is the HTH marR-type domain. Residues 26–49 (LQALAEVLNCSRRHVRSLLGKMQH) constitute a DNA-binding region (H-T-H motif). Positions 163 to 494 (ELEPDLSHHW…EELHQDIESW (332 aa)) are solute-binding.

Activates the small RNA gene sgrS under glucose-phosphate stress conditions as well as yfdZ. Represses its own transcription under both stress and non-stress conditions. Might act as a sensor of the intracellular accumulation of phosphoglucose by binding these molecules in its C-terminal solute-binding domain. This is HTH-type transcriptional regulator SgrR from Yersinia pestis bv. Antiqua (strain Antiqua).